The primary structure comprises 399 residues: Phosphoglycerate kinase (399 aa).

Substrate contacts are provided by residues 20–22, Arg-35, 58–61, Arg-117, and Arg-154; these read DFN and HLGR. ATP-binding positions include Lys-204, Gly-295, Glu-326, and 355-358; that span reads GGDS.

It belongs to the phosphoglycerate kinase family. Monomer.

It is found in the cytoplasm. The enzyme catalyses (2R)-3-phosphoglycerate + ATP = (2R)-3-phospho-glyceroyl phosphate + ADP. It participates in carbohydrate degradation; glycolysis; pyruvate from D-glyceraldehyde 3-phosphate: step 2/5. This is Phosphoglycerate kinase from Beutenbergia cavernae (strain ATCC BAA-8 / DSM 12333 / CCUG 43141 / JCM 11478 / NBRC 16432 / NCIMB 13614 / HKI 0122).